We begin with the raw amino-acid sequence, 767 residues long: Protein NLP3 (767 aa).

Disordered stretches follow at residues 462–494 (ATPPLTQEDPKGKQVSFSFSSASSLENRKRKTK), 590–622 (INPTQTVHVPPKSPPSSSGSQSSSGSSTCCSSE), and 646–672 (HEDQRPVRVTSSLPPLPSATTPRKAKD). The RWP-RK domain maps to 482-566 (SASSLENRKR…MDSVEGVQGS (85 aa)). Residues 485–506 (SLENRKRKTKAEKDITLDTLRQ) adopt a coiled-coil conformation. Composition is skewed to low complexity over residues 604 to 622 (PSSSGSQSSSGSSTCCSSE) and 655 to 667 (TSSLPPLPSATTP). Residues 673-759 (GMKVKAMFGD…ETIRILVHHP (87 aa)) form the PB1 domain.

The protein resides in the nucleus. In terms of biological role, probable transcription factor. The polypeptide is Protein NLP3 (NLP3) (Arabidopsis thaliana (Mouse-ear cress)).